The primary structure comprises 136 residues: Large ribosomal subunit protein eL27B (136 aa).

It belongs to the eukaryotic ribosomal protein eL27 family. In terms of assembly, component of the large ribosomal subunit (LSU). Mature yeast ribosomes consist of a small (40S) and a large (60S) subunit. The 40S small subunit contains 1 molecule of ribosomal RNA (18S rRNA) and 33 different proteins (encoded by 57 genes). The large 60S subunit contains 3 rRNA molecules (25S, 5.8S and 5S rRNA) and 46 different proteins (encoded by 81 genes).

Its subcellular location is the cytoplasm. Functionally, component of the ribosome, a large ribonucleoprotein complex responsible for the synthesis of proteins in the cell. The small ribosomal subunit (SSU) binds messenger RNAs (mRNAs) and translates the encoded message by selecting cognate aminoacyl-transfer RNA (tRNA) molecules. The large subunit (LSU) contains the ribosomal catalytic site termed the peptidyl transferase center (PTC), which catalyzes the formation of peptide bonds, thereby polymerizing the amino acids delivered by tRNAs into a polypeptide chain. The nascent polypeptides leave the ribosome through a tunnel in the LSU and interact with protein factors that function in enzymatic processing, targeting, and the membrane insertion of nascent chains at the exit of the ribosomal tunnel. This Saccharomyces cerevisiae (strain ATCC 204508 / S288c) (Baker's yeast) protein is Large ribosomal subunit protein eL27B.